Consider the following 217-residue polypeptide: Pre-mRNA-splicing factor sap62 (217 aa).

The segment at 54–84 (FECRLCLTTHANENSYLTHTQGKKHQTNLAR) adopts a Matrin-type zinc-finger fold.

The protein belongs to the SF3A2 family. In terms of assembly, belongs to the 40S cdc5-associated complex (or cwf complex), a spliceosome sub-complex reminiscent of a late-stage spliceosome composed of the U2, U5 and U6 snRNAs and at least brr2, cdc5, cwf2/prp3, cwf3/syf1, cwf4/syf3, cwf5/ecm2, spp42/cwf6, cwf7/spf27, cwf8, cwf9, cwf10, cwf11, cwf12, prp45/cwf13, cwf14, cwf15, cwf16, cwf17, cwf18, cwf19, cwf20, cwf21, cwf22, cwf23, cwf24, cwf25, cwf26, cyp7/cwf27, cwf28, cwf29/ist3, lea1, msl1, prp5/cwf1, prp10, prp12/sap130, prp17, prp22, sap61, sap62, sap114, sap145, slu7, smb1, smd1, smd3, smf1, smg1 and syf2.

It localises to the nucleus. Its subcellular location is the cytoplasm. Functionally, involved in mRNA splicing where it associates with cdc5 and the other cwf proteins as part of the spliceosome. The protein is Pre-mRNA-splicing factor sap62 (sap62) of Schizosaccharomyces pombe (strain 972 / ATCC 24843) (Fission yeast).